We begin with the raw amino-acid sequence, 302 residues long: MMTMADPSKMPDLLAKAETLVEALPYLQRYAGQTFVIKYGGHAMGDPEAQRDFAEDVVLLKAVGINPVVVHGGGPQIGAMLKQLGIESTFVGGLRVTDAATAEVAEMVLAGKINKEIVGWIAGLGGRAVGISGKDANLVLAEKVKRSEADPSSGIERHVDLGFVGEPVAVDPTILANLTNDNFIPVVAPVALGADGATYNINADTMAGAIAGALGAKRFFLLTDVAGVLDKSGALLTDLDRAAIDALKADDTITGGMIPKVETCVAAVDAGVEAAVILDGRIPHAMLLEIFTTRGAGTLIHR.

Substrate is bound by residues 73–74 (GG), Arg-95, and Asn-200.

Belongs to the acetylglutamate kinase family. ArgB subfamily.

The protein resides in the cytoplasm. The catalysed reaction is N-acetyl-L-glutamate + ATP = N-acetyl-L-glutamyl 5-phosphate + ADP. It participates in amino-acid biosynthesis; L-arginine biosynthesis; N(2)-acetyl-L-ornithine from L-glutamate: step 2/4. Functionally, catalyzes the ATP-dependent phosphorylation of N-acetyl-L-glutamate. This is Acetylglutamate kinase from Sphingopyxis alaskensis (strain DSM 13593 / LMG 18877 / RB2256) (Sphingomonas alaskensis).